Here is a 402-residue protein sequence, read N- to C-terminus: Thyroid hormone receptor alpha (402 aa).

The disordered stretch occupies residues 1–22 (MEQKPSTLDPLSEPEDTRWLDG). Positions 1–50 (MEQKPSTLDPLSEPEDTRWLDGKRKRKSSQCLVKSSMSGYIPSYLDKDEQ) are modulating. The residue at position 12 (Ser12) is a Phosphoserine; by CK2. Ser28 carries the phosphoserine modification. The Zn(2+) site is built by Cys51, Cys54, Cys68, Cys71, Cys89, Cys95, Cys105, and Cys108. NR C4-type zinc fingers lie at residues 51–71 (CVVC…CEGC) and 89–113 (CKYD…FKKC). Residues 51 to 125 (CVVCGDKATG…VGMAMDLVLD (75 aa)) constitute a DNA-binding region (nuclear receptor). The NR LBD domain maps to 161–402 (EEWELIHVVT…ELFPPLFLEV (242 aa)). 2 residues coordinate 3,3',5-triiodo-L-thyronine: Arg226 and Ser275.

The protein belongs to the nuclear hormone receptor family. NR1 subfamily. Probably interacts with SFPQ.

It localises to the nucleus. Functionally, nuclear hormone receptor that can act as a repressor or activator of transcription. High affinity receptor for thyroid hormones, including triiodothyronine and thyroxine. This Aptenodytes patagonicus (King penguin) protein is Thyroid hormone receptor alpha (THRA).